Reading from the N-terminus, the 308-residue chain is Probable manganese-dependent inorganic pyrophosphatase (308 aa).

The Mn(2+) site is built by histidine 9, aspartate 13, aspartate 15, aspartate 75, histidine 97, and aspartate 149.

This sequence belongs to the PPase class C family. Requires Mn(2+) as cofactor.

The protein localises to the cytoplasm. It carries out the reaction diphosphate + H2O = 2 phosphate + H(+). This chain is Probable manganese-dependent inorganic pyrophosphatase, found in Staphylococcus carnosus (strain TM300).